Here is a 764-residue protein sequence, read N- to C-terminus: Subtilisin-like protease SBT3.1 (764 aa).

Residues 1 to 32 (MIQTLKTDSSFRLCFAAIAFGFVFIMNGKLSS) form the signal peptide. A propeptide spans 33-120 (GTTPHEFPVY…LLENRKLGLQ (88 aa)) (activation peptide). Residues 41 to 116 (VYIFYLGERK…EVIILLENRK (76 aa)) enclose the Inhibitor I9 domain. A glycan (N-linked (GlcNAc...) asparagine) is linked at Asn76. A Peptidase S8 domain is found at 124-610 (TWDYLGQFST…GGLVNLEKAT (487 aa)). The active-site Charge relay system is Asp156. Residue Asn216 is glycosylated (N-linked (GlcNAc...) asparagine). His230 functions as the Charge relay system in the catalytic mechanism. Asn245 and Asn374 each carry an N-linked (GlcNAc...) asparagine glycan. The active-site Charge relay system is Ser541. N-linked (GlcNAc...) asparagine glycans are attached at residues Asn674, Asn711, and Asn747.

It belongs to the peptidase S8 family.

It is found in the secreted. This Arabidopsis thaliana (Mouse-ear cress) protein is Subtilisin-like protease SBT3.1.